The following is a 292-amino-acid chain: High-affinity heme uptake system protein IsdE (292 aa).

The signal sequence occupies residues 1–19; sequence MRIIKYLTILVISVVILTS. Cys-20 is lipidated: N-palmitoyl cysteine. Cys-20 carries S-diacylglycerol cysteine lipidation. Residues 35–291 enclose the Fe/B12 periplasmic-binding domain; that stretch reads RIVPTTVALT…QLYDLFYKDK (257 aa). Positions 41, 42, 60, 61, 78, and 229 each coordinate heme.

It belongs to the bacterial solute-binding protein 8 family. It depends on heme b as a cofactor.

The protein localises to the cell membrane. In terms of biological role, involved in heme (porphyrin) scavenging. Binds Fe(2+) and Fe(3+) heme but the largest fraction is Fe(2+) heme. Functions as a high-affinity heme binding protein and probably has a role in relaying heme-iron from cell wall-anchored isd proteins receptors to the probable permease IsdF. The sequence is that of High-affinity heme uptake system protein IsdE (isdE) from Staphylococcus aureus (strain bovine RF122 / ET3-1).